Consider the following 434-residue polypeptide: Probable transcription factor HMS1 (434 aa).

In terms of domain architecture, bHLH spans 266–341; that stretch reads TGRVSHNIIE…TKSIEYICHL (76 aa). Positions 365 to 434 are disordered; that stretch reads HLTEPSQPLS…DMDFNNAGDF (70 aa). 2 stretches are compositionally biased toward polar residues: residues 368 to 382 and 402 to 423; these read EPSQPLSDNSSSEQV and PLHNIQYNIPHQNGLMSGTNNS.

In terms of assembly, interacts with the G1/S-specific cyclin PCL1. In terms of processing, phosphorylated by the cyclin-CDK complex PCL1-PHO85.

It is found in the nucleus. Functionally, involved in exit from mitosis and pseudohyphal differentiation. The chain is Probable transcription factor HMS1 (HMS1) from Saccharomyces cerevisiae (strain ATCC 204508 / S288c) (Baker's yeast).